The sequence spans 129 residues: MTPPAIPAAPPATGPAAATDPLDALRARLDAADAALLDAVRTRLDICLRIGEYKRLHQVPMMQPHRIAQVHANAARYAADHGIDPAFLRTLYDTIITETCRLEDEWIASGGAPVPTPVHASASARGAVS.

In terms of domain architecture, Chorismate mutase spans 16–107 (AAATDPLDAL…ETCRLEDEWI (92 aa)).

The catalysed reaction is 4-amino-4-deoxychorismate = 4-amino-4-deoxyprephenate. Its pathway is antibiotic biosynthesis. Its function is as follows. Involved in pristinamycin I biosynthesis. Probably catalyzes the conversion of 4-amino-4-deoxychorismate to 4-amino-4-deoxyprephenate. The chain is 4-amino-4-deoxychorismate mutase from Streptomyces pristinaespiralis.